Reading from the N-terminus, the 455-residue chain is Ribosomal protein uS12 methylthiotransferase RimO (455 aa).

The MTTase N-terminal domain occupies 21 to 131; that stretch reads GKVGFISLGC…VVGAVHQYVP (111 aa). The [4Fe-4S] cluster site is built by C30, C66, C95, C164, C168, and C171. The Radical SAM core domain maps to 150–387; that stretch reads LTPRHYAYLK…MAKQAEISAA (238 aa). The TRAM domain maps to 390–455; that stretch reads QAKIGRTIDV…DEHDLWARLI (66 aa).

The protein belongs to the methylthiotransferase family. RimO subfamily. [4Fe-4S] cluster serves as cofactor.

The protein resides in the cytoplasm. The catalysed reaction is L-aspartate(89)-[ribosomal protein uS12]-hydrogen + (sulfur carrier)-SH + AH2 + 2 S-adenosyl-L-methionine = 3-methylsulfanyl-L-aspartate(89)-[ribosomal protein uS12]-hydrogen + (sulfur carrier)-H + 5'-deoxyadenosine + L-methionine + A + S-adenosyl-L-homocysteine + 2 H(+). Functionally, catalyzes the methylthiolation of an aspartic acid residue of ribosomal protein uS12. The chain is Ribosomal protein uS12 methylthiotransferase RimO from Marinobacter nauticus (strain ATCC 700491 / DSM 11845 / VT8) (Marinobacter aquaeolei).